The primary structure comprises 61 residues: Small ribosomal subunit protein uS14 (61 aa).

4 residues coordinate Zn(2+): Cys-24, Cys-27, Cys-40, and Cys-43.

The protein belongs to the universal ribosomal protein uS14 family. Zinc-binding uS14 subfamily. In terms of assembly, part of the 30S ribosomal subunit. Contacts proteins S3 and S10. Requires Zn(2+) as cofactor.

In terms of biological role, binds 16S rRNA, required for the assembly of 30S particles and may also be responsible for determining the conformation of the 16S rRNA at the A site. This chain is Small ribosomal subunit protein uS14, found in Geotalea daltonii (strain DSM 22248 / JCM 15807 / FRC-32) (Geobacter daltonii).